The following is a 480-amino-acid chain: Cysteine--tRNA ligase (480 aa).

Position 27 (Cys-27) interacts with Zn(2+). The 'HIGH' region signature appears at Pro-29–Asn-39. Zn(2+) is bound by residues Cys-221, His-246, and Glu-250. Residues Lys-278 to Ser-282 carry the 'KMSKS' region motif. Position 281 (Lys-281) interacts with ATP.

This sequence belongs to the class-I aminoacyl-tRNA synthetase family. Monomer. It depends on Zn(2+) as a cofactor.

It is found in the cytoplasm. The catalysed reaction is tRNA(Cys) + L-cysteine + ATP = L-cysteinyl-tRNA(Cys) + AMP + diphosphate. This is Cysteine--tRNA ligase from Borreliella burgdorferi (strain ZS7) (Borrelia burgdorferi).